We begin with the raw amino-acid sequence, 167 residues long: Ubiquitin-fold modifier-conjugating enzyme 1 (167 aa).

Cysteine 116 (glycyl thioester intermediate) is an active-site residue. Lysine 122 participates in a covalent cross-link: Glycyl lysine isopeptide (Lys-Gly) (interchain with G-Cter in UFM1).

Belongs to the ubiquitin-conjugating enzyme family. UFC1 subfamily. In terms of assembly, interacts with UBA5 (via C-terminus). Interacts with UFL1. Interacts with UFM1. Interacts with KIRREL3. Post-translationally, ufmylated at Lys-122. Deufmylated by UFSP1.

E2-like enzyme which specifically catalyzes the second step in ufmylation. Accepts the ubiquitin-like modifier UFM1 from the E1 enzyme UBA5 and forms an intermediate with UFM1 via a thioester linkage. Ufmylation is involved in various processes, such as ribosome recycling, response to DNA damage, interferon response or reticulophagy (also called ER-phagy). In Mus musculus (Mouse), this protein is Ubiquitin-fold modifier-conjugating enzyme 1.